Here is a 495-residue protein sequence, read N- to C-terminus: DNA-directed RNA polymerase subunit alpha (495 aa).

The segment at 1 to 301 (MPYIKHIETK…RMLASLQAPP (301 aa)) is alpha N-terminal domain (alpha-NTD). Disordered regions lie at residues 159-227 (SLVP…EAPH) and 391-495 (QEQV…PEET). The insert stretch occupies residues 170–237 (PRDPLEPEND…IPSMRDDHMT (68 aa)). The span at 172–186 (DPLEPENDSKSETKS) shows a compositional bias: basic and acidic residues. 2 stretches are compositionally biased toward polar residues: residues 207 to 219 (VNAQ…SNST) and 391 to 403 (QEQV…SQIA). The alpha C-terminal domain (alpha-CTD) stretch occupies residues 317 to 495 (AKEIALTPIE…LSSSQNPEET (179 aa)). The span at 417–426 (RPIDSKETRR) shows a compositional bias: basic and acidic residues. The segment covering 444–453 (RKSSKTKVKA) has biased composition (basic residues). Composition is skewed to polar residues over residues 464 to 473 (KSANLQQAEE) and 486 to 495 (LSSSQNPEET).

This sequence belongs to the RNA polymerase alpha chain family. As to quaternary structure, in plastids the minimal PEP RNA polymerase catalytic core is composed of four subunits: alpha, beta, beta', and beta''. When a (nuclear-encoded) sigma factor is associated with the core the holoenzyme is formed, which can initiate transcription.

It is found in the plastid. Its subcellular location is the chloroplast. The enzyme catalyses RNA(n) + a ribonucleoside 5'-triphosphate = RNA(n+1) + diphosphate. Its function is as follows. DNA-dependent RNA polymerase catalyzes the transcription of DNA into RNA using the four ribonucleoside triphosphates as substrates. The sequence is that of DNA-directed RNA polymerase subunit alpha from Nephroselmis olivacea (Green alga).